We begin with the raw amino-acid sequence, 593 residues long: Metal-response element-binding transcription factor 2 (593 aa).

The interval 1-24 (MRDSTGAGNSLVHKRSPLRRNQKT) is disordered. The segment covering 12–22 (VHKRSPLRRNQ) has biased composition (basic residues). The residue at position 24 (Thr-24) is a Phosphothreonine. The region spanning 44 to 101 (CKFEEGQDVLARWSDGLFYLGTIKKINILKQSCFIIFEDSSKSWVLWKDIQTGATGSG) is the Tudor domain. 2 PHD-type zinc fingers span residues 102–157 (EMVC…CVFA) and 201–255 (QCYC…CSSG). Disordered regions lie at residues 357-410 (VAFK…GPYT) and 444-486 (GIAH…TRTG). Lys-360 is covalently cross-linked (Glycyl lysine isopeptide (Lys-Gly) (interchain with G-Cter in SUMO2)). The segment covering 360-374 (KAEKEPEGTSHEFKI) has biased composition (basic and acidic residues). Polar residues predominate over residues 447 to 470 (HSSNTSDVDLTGASSANETTSASI). A Phosphoserine modification is found at Ser-452. A Glycyl lysine isopeptide (Lys-Gly) (interchain with G-Cter in SUMO2) cross-link involves residue Lys-522.

The protein belongs to the Polycomblike family. As to quaternary structure, associates with the PRC2 complex, which consists of the core components EED, EZH1 or EZH2, SUZ12, and RBBP4, and various combinations of accessory subunits including AEBP2, JARID2, PHF19, MTF2 and EPOP. Forms a dimeric PRC2.1 (class 1, PRC-PCL) complex consisting of at least SUZ12, RBBP4, and PHF19 or MTF2; PHF19 and MTF2 stabilize the dimeric structure which enhances PRC2 interaction with chromatin.

The protein localises to the nucleus. Polycomb group (PcG) protein that specifically binds histone H3 trimethylated at 'Lys-36' (H3K36me3) and recruits the PRC2 complex, thus enhancing PRC2 H3K27me3 methylation activity. Regulates the transcriptional networks during embryonic stem cell self-renewal and differentiation. Promotes recruitment of the PRC2 complex to the inactive X chromosome in differentiating XX ES cells and PRC2 recruitment to target genes in undifferentiated ES cells. Required to repress Hox genes by enhancing H3K27me3 methylation of the PRC2 complex. In some conditions may act as an inhibitor of PRC2 activity: able to activate the CDKN2A gene and promote cellular senescence by suppressing the catalytic activity of the PRC2 complex locally. Binds to the metal-regulating-element (MRE) of MT1A gene promoter. The protein is Metal-response element-binding transcription factor 2 (Mtf2) of Mus musculus (Mouse).